A 367-amino-acid polypeptide reads, in one-letter code: Secondary metabolism regulator laeA (367 aa).

A disordered region spans residues 1 to 82 (MFGQQQQQQP…PETYPGHEEN (82 aa)). Polar residues predominate over residues 19–41 (LNHNSRWTPPNESAQPRRSSNAM). Basic and acidic residues-rich tracts occupy residues 47-56 (TDRDPAEGHP) and 71-82 (KSPETYPGHEEN).

It belongs to the methyltransferase superfamily. LaeA methyltransferase family. As to quaternary structure, component of the heterotrimeric velvet complex composed of laeA, veA and velB; VeA acting as a bridging protein between laeA and velB.

It is found in the nucleus. The enzyme catalyses L-methionyl-[protein] + S-adenosyl-L-methionine = S-methyl-L-methionyl-[protein] + S-adenosyl-L-homocysteine. In terms of biological role, methyltransferase that performs automethylation. No other methyl-accepting substrate has been identified yet. Component of the velvet transcription factor complex that acts as a global regulator for secondary metabolite gene expression. Controls the expression of the monacolin K gene clusters. Also regulates pigmentation. The sequence is that of Secondary metabolism regulator laeA from Monascus pilosus (Red mold).